The following is a 394-amino-acid chain: L-lactate dehydrogenase (394 aa).

The FMN hydroxy acid dehydrogenase domain occupies 1-380; the sequence is MIISAASDYR…SRDSLVQNAE (380 aa). Y24 contacts substrate. 2 residues coordinate FMN: S106 and Q127. Position 129 (Y129) interacts with substrate. T155 serves as a coordination point for FMN. R164 provides a ligand contact to substrate. K251 serves as a coordination point for FMN. The active-site Proton acceptor is the H275. R278 serves as a coordination point for substrate. 306 to 330 contacts FMN; sequence DSGIRNGLDVVRMIALGADSVLLGR.

Belongs to the FMN-dependent alpha-hydroxy acid dehydrogenase family. Requires FMN as cofactor.

It is found in the cell inner membrane. It catalyses the reaction (S)-lactate + A = pyruvate + AH2. Catalyzes the conversion of L-lactate to pyruvate. Is coupled to the respiratory chain. The chain is L-lactate dehydrogenase from Klebsiella pneumoniae (strain 342).